Here is a 733-residue protein sequence, read N- to C-terminus: Ribosomal protein S6 kinase 2 alpha (733 aa).

The interval 18 to 38 (EDPENGHGSPEEGGRHTSKDE) is disordered. Residues 62–321 (FVLLKVLGQG…AEEIKRQPFF (260 aa)) enclose the Protein kinase 1 domain. ATP-binding positions include 68 to 76 (LGQGSFGKV) and Lys-94. Catalysis depends on Asp-187, which acts as the Proton acceptor. At Ser-221 the chain carries Phosphoserine. Positions 322 to 391 (STIDWNKLFR…VAPALVEEDA (70 aa)) constitute an AGC-kinase C-terminal domain. Position 359 is a phosphothreonine (Thr-359). A Phosphoserine modification is found at Ser-363. Ser-380 carries the phosphoserine; by autocatalysis modification. Residues 416–673 (YTVRETIGVG…AKQVLQHEWI (258 aa)) form the Protein kinase 2 domain. ATP is bound by residues 422–430 (IGVGSYSVC) and Lys-445. Asp-533 acts as the Proton acceptor in catalysis. Position 571 is a phosphothreonine (Thr-571). Phosphoserine is present on Ser-730.

The protein belongs to the protein kinase superfamily. AGC Ser/Thr protein kinase family. S6 kinase subfamily. It depends on Mg(2+) as a cofactor. Post-translationally, autophosphorylated on Ser-380, as part of the activation process.

It carries out the reaction L-seryl-[protein] + ATP = O-phospho-L-seryl-[protein] + ADP + H(+). The catalysed reaction is L-threonyl-[protein] + ATP = O-phospho-L-threonyl-[protein] + ADP + H(+). With respect to regulation, activated by multiple phosphorylations on threonine and serine residues. Serine/threonine kinase that may play a role in mediating the growth-factor and stress induced activation of transcription. The protein is Ribosomal protein S6 kinase 2 alpha (rps6ka) of Xenopus laevis (African clawed frog).